We begin with the raw amino-acid sequence, 624 residues long: NADPH-dependent diflavin oxidoreductase 1 (624 aa).

Positions 6 to 168 (IVILYGSETG…VYYEFEKRII (163 aa)) constitute a Flavodoxin-like domain. Residues 12–17 (SETGNA), 59–62 (STTG), 106–115 (LGDSSYPRFN), and Glu-142 contribute to the FMN site. Residues 226–474 (ETIRHGTVKK…LQNNHLLHED (249 aa)) form the FAD-binding FR-type domain. FAD contacts are provided by residues Arg-384, 414 to 417 (RFYS), and 446 to 449 (GLCT). Residues 539–540 (SR) and 548–552 (AKYVQ) each bind NADP(+). Trp-624 serves as a coordination point for FAD.

The protein belongs to the NADPH-dependent diflavin oxidoreductase NDOR1 family. This sequence in the N-terminal section; belongs to the flavodoxin family. It in the C-terminal section; belongs to the flavoprotein pyridine nucleotide cytochrome reductase family. As to quaternary structure, interacts with DRE2; as part of the cytosolic iron-sulfur (Fe-S) protein assembly (CIA) machinery. FAD serves as cofactor. The cofactor is FMN.

Its subcellular location is the cytoplasm. The protein resides in the mitochondrion. The enzyme catalyses 2 oxidized [2Fe-2S]-[protein] + NADPH = 2 reduced [2Fe-2S]-[protein] + NADP(+) + H(+). In terms of biological role, NADPH-dependent reductase which is a central component of the cytosolic iron-sulfur (Fe-S) protein assembly (CIA) machinery. Transfers electrons from NADPH via its FAD and FMN prosthetic groups to the [2Fe-2S] cluster of DRE2, another key component of the CIA machinery. In turn, this reduced cluster provides electrons for assembly of cytosolic iron-sulfur cluster proteins. Positively controls H(2)O(2)-induced cell death. The protein is NADPH-dependent diflavin oxidoreductase 1 of Kluyveromyces lactis (strain ATCC 8585 / CBS 2359 / DSM 70799 / NBRC 1267 / NRRL Y-1140 / WM37) (Yeast).